A 102-amino-acid polypeptide reads, in one-letter code: NADH-quinone oxidoreductase subunit K (102 aa).

The next 3 helical transmembrane spans lie at 6-26 (LEHGLIVATILFALGFYGVMV), 30-50 (LLFMLMSLEIMMNAAALAFVL), and 62-82 (IMFILILTLAAAEACIGLAIV).

This sequence belongs to the complex I subunit 4L family. In terms of assembly, NDH-1 is composed of 14 different subunits. Subunits NuoA, H, J, K, L, M, N constitute the membrane sector of the complex.

The protein localises to the cell inner membrane. The catalysed reaction is a quinone + NADH + 5 H(+)(in) = a quinol + NAD(+) + 4 H(+)(out). Functionally, NDH-1 shuttles electrons from NADH, via FMN and iron-sulfur (Fe-S) centers, to quinones in the respiratory chain. The immediate electron acceptor for the enzyme in this species is believed to be ubiquinone. Couples the redox reaction to proton translocation (for every two electrons transferred, four hydrogen ions are translocated across the cytoplasmic membrane), and thus conserves the redox energy in a proton gradient. In Acinetobacter baylyi (strain ATCC 33305 / BD413 / ADP1), this protein is NADH-quinone oxidoreductase subunit K.